The chain runs to 145 residues: MVAFSDKQEALVNGAYEAFKANIPKYSVVFYTTILEKAPAAKNLFSFLANGVDATNPKLTGHAEKLFGLVRDSAAQLRASGGVVADAALGAVHSQKAVNDAQFVVVKEALVKTLKEAVGDKWSDELGTAVELAYDELAAAIKKAY.

The Globin domain maps to 3-145 (AFSDKQEALV…ELAAAIKKAY (143 aa)). Nitrated tyrosine is present on residues Tyr26 and Tyr31. Ser46 is a binding site for heme b. Ser46 carries the post-translational modification Phosphoserine. His62 provides a ligand contact to O2. Residues Lys65, His93, and Lys96 each contribute to the heme b site. Tyr134 carries the post-translational modification Nitrated tyrosine.

This sequence belongs to the plant globin family. As to quaternary structure, monomer. In terms of processing, nitrated in effective nodules and particularly in hypoxic conditions; this mechanism may play a protective role in the symbiosis by buffering toxic peroxynitrite NO(2)(-). Nitration level decrease during nodule senescence. Phosphorylation at Ser-46 disrupts the molecular environment of its porphyrin ring oxygen binding pocket, thus leading to a reduced oxygen consumption and to the delivery of oxygen O(2) to symbiosomes. As to expression, root nodules.

It localises to the cytoplasm. Its subcellular location is the cytosol. The protein resides in the nucleus. Leghemoglobin that reversibly binds oxygen O(2) through a pentacoordinated heme iron. In root nodules, facilitates the diffusion of oxygen to the bacteroids while preventing the bacterial nitrogenase from being inactivated by buffering dioxygen, nitric oxide and carbon monoxide, and promoting the formation of reactive oxygen species (ROS, e.g. H(2)O(2)). This role is essential for symbiotic nitrogen fixation (SNF). This chain is Leghemoglobin-1, found in Vigna unguiculata (Cowpea).